We begin with the raw amino-acid sequence, 276 residues long: UPF0328 protein ECU01_0090/ECU01_1520/ECU02_1550/ECU08_0020 (276 aa).

A disordered region spans residues 1 to 24 (MGIIDVQRSHLTATPSKERDAPAH).

Belongs to the UPF0328 family.

In Encephalitozoon cuniculi (strain GB-M1) (Microsporidian parasite), this protein is UPF0328 protein ECU01_0090/ECU01_1520/ECU02_1550/ECU08_0020.